A 159-amino-acid chain; its full sequence is FCS-Like Zinc finger 2 (159 aa).

The FLZ-type zinc finger occupies 75–119; it reads HFLDSCFLCKKRLGDNRDIFMYRGDTPFCSEECREEQIERDEAKE. Residues 113–122 show a composition bias toward basic and acidic residues; that stretch reads ERDEAKEKKQ. Residues 113-159 form a disordered region; that stretch reads ERDEAKEKKQSLSTSVKAMRRNEKRSSSSSPTRSRNYAFRTGTVAAA.

The protein belongs to the FLZ family. As to quaternary structure, interacts with KIN10 and KIN11 via its FLZ-type zinc finger domain. Interacts with KINB1, KINB2, KINB3 and SNF4 via its N-terminal part. Forms heterodimer with FLZ7, FLZ10, FLZ11, FLZ12, FLZ15, FLZ17 and FLZ18 in vitro.

May act as an adapter to facilitate the interaction of SnRK1 complex with effector proteins, conferring tissue- and stimulus-type specific differences in the SnRK1 regulation pathway. This chain is FCS-Like Zinc finger 2, found in Arabidopsis thaliana (Mouse-ear cress).